Reading from the N-terminus, the 244-residue chain is DNA repair protein RecO (244 aa).

It belongs to the RecO family.

Its function is as follows. Involved in DNA repair and RecF pathway recombination. The sequence is that of DNA repair protein RecO from Geobacter metallireducens (strain ATCC 53774 / DSM 7210 / GS-15).